We begin with the raw amino-acid sequence, 262 residues long: Serine/arginine-rich SC35-like splicing factor SCL30 (262 aa).

Over residues 1–14 (MRRYSPPYYSPPRR) the composition is skewed to low complexity. Disordered regions lie at residues 1–48 (MRRY…SHGS) and 123–262 (ASES…VSPR). Residues serine 5, serine 10, and serine 22 each carry the phosphoserine modification. Residues 31–42 (GYGGGGGGGGRR) show a composition bias toward gly residues. Residues 47-125 (GSLLVRNIPL…REITVVVASE (79 aa)) enclose the RRM domain. Basic and acidic residues predominate over residues 125-152 (ESRKRPEEMRVKTRTRSREPSGSRDRSH). The span at 153–167 (GRSRSRSISRSRSPR) shows a compositional bias: basic residues. Phosphoserine occurs at positions 182, 204, and 206. Tyrosine 209 carries the post-translational modification Phosphotyrosine. Residues 217–239 (PDRDRNGDNEIREKPGYEAEDRR) are compositionally biased toward basic and acidic residues. The segment covering 243 to 262 (RAVSRSPSGSRSRSVEVSPR) has biased composition (low complexity). A phosphoserine mark is found at serine 254, serine 256, and serine 260.

This sequence belongs to the splicing factor SR family. SCL subfamily. As to quaternary structure, component of the spliceosome. Interacts with RS2Z33, CYP59, CYP63 and CYP95. In terms of processing, phosphorylated.

The protein localises to the nucleus speckle. Its function is as follows. Involved in intron recognition and spliceosome assembly. Probably active at the 5' splice sites. This Arabidopsis thaliana (Mouse-ear cress) protein is Serine/arginine-rich SC35-like splicing factor SCL30 (SCL30).